The primary structure comprises 1028 residues: Sporulation-specific protein 3 (1028 aa).

It is found in the prospore membrane. In terms of biological role, has a role in spore morphogenesis. Involved in the assembly of the forespore membrane. This Schizosaccharomyces pombe (strain 972 / ATCC 24843) (Fission yeast) protein is Sporulation-specific protein 3 (spo3).